A 400-amino-acid polypeptide reads, in one-letter code: tRNA-specific 2-thiouridylase MnmA (400 aa).

Residues A19–S26 and L45 each bind ATP. Residue C113 is the Nucleophile of the active site. A disulfide bond links C113 and C210. Position 137 (G137) interacts with ATP. The tract at residues R160–Q162 is interaction with tRNA. The active-site Cysteine persulfide intermediate is C210.

It belongs to the MnmA/TRMU family.

It is found in the cytoplasm. The catalysed reaction is S-sulfanyl-L-cysteinyl-[protein] + uridine(34) in tRNA + AH2 + ATP = 2-thiouridine(34) in tRNA + L-cysteinyl-[protein] + A + AMP + diphosphate + H(+). Catalyzes the 2-thiolation of uridine at the wobble position (U34) of tRNA, leading to the formation of s(2)U34. This chain is tRNA-specific 2-thiouridylase MnmA, found in Rhodopseudomonas palustris (strain BisB18).